A 515-amino-acid polypeptide reads, in one-letter code: ATP synthase subunit alpha (515 aa).

171 to 178 (GDRQTGKT) is an ATP binding site.

The protein belongs to the ATPase alpha/beta chains family. As to quaternary structure, F-type ATPases have 2 components, CF(1) - the catalytic core - and CF(0) - the membrane proton channel. CF(1) has five subunits: alpha(3), beta(3), gamma(1), delta(1), epsilon(1). CF(0) has three main subunits: a(1), b(2) and c(9-12). The alpha and beta chains form an alternating ring which encloses part of the gamma chain. CF(1) is attached to CF(0) by a central stalk formed by the gamma and epsilon chains, while a peripheral stalk is formed by the delta and b chains.

The protein localises to the cell inner membrane. It catalyses the reaction ATP + H2O + 4 H(+)(in) = ADP + phosphate + 5 H(+)(out). Its function is as follows. Produces ATP from ADP in the presence of a proton gradient across the membrane. The alpha chain is a regulatory subunit. The polypeptide is ATP synthase subunit alpha (Xanthomonas oryzae pv. oryzae (strain MAFF 311018)).